The chain runs to 342 residues: Anthranilate phosphoribosyltransferase (342 aa).

5-phospho-alpha-D-ribose 1-diphosphate is bound by residues G79, 82-83 (GD), T87, 89-92 (NIST), 107-115 (KHCNQRISS), and S119. G79 is an anthranilate binding site. S91 is a Mg(2+) binding site. An anthranilate-binding site is contributed by N110. R165 is an anthranilate binding site. Mg(2+) is bound by residues D223 and E224.

Belongs to the anthranilate phosphoribosyltransferase family. Homodimer. Mg(2+) is required as a cofactor.

The enzyme catalyses N-(5-phospho-beta-D-ribosyl)anthranilate + diphosphate = 5-phospho-alpha-D-ribose 1-diphosphate + anthranilate. It functions in the pathway amino-acid biosynthesis; L-tryptophan biosynthesis; L-tryptophan from chorismate: step 2/5. Catalyzes the transfer of the phosphoribosyl group of 5-phosphorylribose-1-pyrophosphate (PRPP) to anthranilate to yield N-(5'-phosphoribosyl)-anthranilate (PRA). The polypeptide is Anthranilate phosphoribosyltransferase (Buchnera aphidicola subsp. Acyrthosiphon pisum (strain 5A)).